The primary structure comprises 220 residues: MNYAKYIDHTLLKPESTRNQIDKIIEEAKAFNFKSICINPTHVKYAAEQLKGSDVLVCTVIGFPLGASTTETKIFETKDAINKGASEVDMVINIGALKDGRFEDVQKDIEGVVGAANGKTVKVIIETCLLTDEEKVKASELSKVAGADFVKTSTGFAGGGATPEDVKLMKDTVGDDLEVKASGGVRNLEDFNHMLEAGATRIGASAGVEIVQGLESDSDY.

The active-site Proton donor/acceptor is Asp89. Lys151 (schiff-base intermediate with acetaldehyde) is an active-site residue. Lys180 serves as the catalytic Proton donor/acceptor.

It belongs to the DeoC/FbaB aldolase family. DeoC type 1 subfamily.

It is found in the cytoplasm. The enzyme catalyses 2-deoxy-D-ribose 5-phosphate = D-glyceraldehyde 3-phosphate + acetaldehyde. It functions in the pathway carbohydrate degradation; 2-deoxy-D-ribose 1-phosphate degradation; D-glyceraldehyde 3-phosphate and acetaldehyde from 2-deoxy-alpha-D-ribose 1-phosphate: step 2/2. In terms of biological role, catalyzes a reversible aldol reaction between acetaldehyde and D-glyceraldehyde 3-phosphate to generate 2-deoxy-D-ribose 5-phosphate. In Staphylococcus saprophyticus subsp. saprophyticus (strain ATCC 15305 / DSM 20229 / NCIMB 8711 / NCTC 7292 / S-41), this protein is Deoxyribose-phosphate aldolase.